The sequence spans 243 residues: Max-interacting protein 1 (243 aa).

Residues 76–128 (HYRSTHNELEKNRRAHLRLCLERLKTLIPLGPECSRHTTLGLLNKAKAHIKKL) form the bHLH domain. The tract at residues 164–235 (EAERIRTDSM…TASDEGYSSC (72 aa)) is disordered. Residues 188 to 198 (DQEEMEVDVES) are compositionally biased toward acidic residues. Over residues 222 to 235 (SLQSTASDEGYSSC) the composition is skewed to polar residues.

As to quaternary structure, efficient DNA binding requires dimerization with another bHLH protein. Binds DNA as a heterodimer with MAX.

Its subcellular location is the nucleus. Its function is as follows. Transcriptional repressor. MXI1 binds with MAX to form a sequence-specific DNA-binding protein complex which recognizes the core sequence 5'-CAC[GA]TG-3'. MXI1 thus antagonizes MYC transcriptional activity by competing for MAX. The protein is Max-interacting protein 1 (mxi1) of Danio rerio (Zebrafish).